Here is a 280-residue protein sequence, read N- to C-terminus: P32 adhesin (280 aa).

2 helical membrane-spanning segments follow: residues phenylalanine 13–valine 37 and tryptophan 68–leucine 92. Positions glutamate 114–valine 128 are enriched in polar residues. 2 disordered regions span residues glutamate 114–glutamine 149 and phenylalanine 163–proline 280. Composition is skewed to low complexity over residues proline 132–glutamine 149 and glutamine 168–proline 188. 13 tandem repeats follow at residues phenylalanine 163–glutamine 168, arginine 170–asparagine 174, phenylalanine 186–methionine 190, asparagine 191–glutamine 195, arginine 196–asparagine 200, phenylalanine 199–glutamine 204, arginine 206–asparagine 210, phenylalanine 222–methionine 226, asparagine 227–glutamine 231, arginine 232–asparagine 236, phenylalanine 249–glutamine 254, arginine 256–asparagine 260, and phenylalanine 259–glutamine 264. The interval phenylalanine 163 to glutamine 264 is 6 X 5 AA repeats of [FM]-N-P-N-M-Q. Residues arginine 170–asparagine 260 are 5 X 5 AA repeats of R-P-G-F-N. Residues phenylalanine 186–methionine 226 are 2 X 5 AA repeats of F-N-P-R-M. Residues glutamine 204–proline 224 are compositionally biased toward low complexity. Residues phenylalanine 235–proline 257 show a composition bias toward low complexity. The span at proline 261–glutamine 271 shows a compositional bias: polar residues.

It is found in the cell projection. It localises to the attachment organelle membrane. Its function is as follows. Adhesin necessary for successful cytadherence and virulence. This chain is P32 adhesin, found in Mycoplasma genitalium (strain ATCC 33530 / DSM 19775 / NCTC 10195 / G37) (Mycoplasmoides genitalium).